The primary structure comprises 69 residues: MPLEVDELRKMDLKQLKERLNELEMQLLKLRVESRMGTLKNTASIKNTRKDIARILTVIGEKSKKEAKK.

This sequence belongs to the universal ribosomal protein uL29 family.

The polypeptide is Large ribosomal subunit protein uL29 (Sulfolobus acidocaldarius (strain ATCC 33909 / DSM 639 / JCM 8929 / NBRC 15157 / NCIMB 11770)).